We begin with the raw amino-acid sequence, 226 residues long: ATP synthase F(0) complex subunit a (226 aa).

A run of 6 helical transmembrane segments spans residues 12 to 32 (PTVL…LLIP), 68 to 88 (WSLM…LGLL), 97 to 117 (QLSM…AMGL), 138 to 158 (IPML…ALAV), 182 to 202 (LAIN…LTIL), and 203 to 223 (ETAI…LYLH).

This sequence belongs to the ATPase A chain family. In terms of assembly, component of the ATP synthase complex composed at least of ATP5F1A/subunit alpha, ATP5F1B/subunit beta, ATP5MC1/subunit c (homooctomer), MT-ATP6/subunit a, MT-ATP8/subunit 8, ATP5ME/subunit e, ATP5MF/subunit f, ATP5MG/subunit g, ATP5MK/subunit k, ATP5MJ/subunit j, ATP5F1C/subunit gamma, ATP5F1D/subunit delta, ATP5F1E/subunit epsilon, ATP5PF/subunit F6, ATP5PB/subunit b, ATP5PD/subunit d, ATP5PO/subunit OSCP. ATP synthase complex consists of a soluble F(1) head domain (subunits alpha(3) and beta(3)) - the catalytic core - and a membrane F(0) domain - the membrane proton channel (subunits c, a, 8, e, f, g, k and j). These two domains are linked by a central stalk (subunits gamma, delta, and epsilon) rotating inside the F1 region and a stationary peripheral stalk (subunits F6, b, d, and OSCP). Interacts with DNAJC30; interaction is direct.

Its subcellular location is the mitochondrion inner membrane. The enzyme catalyses H(+)(in) = H(+)(out). In terms of biological role, subunit a, of the mitochondrial membrane ATP synthase complex (F(1)F(0) ATP synthase or Complex V) that produces ATP from ADP in the presence of a proton gradient across the membrane which is generated by electron transport complexes of the respiratory chain. ATP synthase complex consist of a soluble F(1) head domain - the catalytic core - and a membrane F(1) domain - the membrane proton channel. These two domains are linked by a central stalk rotating inside the F(1) region and a stationary peripheral stalk. During catalysis, ATP synthesis in the catalytic domain of F(1) is coupled via a rotary mechanism of the central stalk subunits to proton translocation. With the subunit c (ATP5MC1), forms the proton-conducting channel in the F(0) domain, that contains two crucial half-channels (inlet and outlet) that facilitate proton movement from the mitochondrial intermembrane space (IMS) into the matrix. Protons are taken up via the inlet half-channel and released through the outlet half-channel, following a Grotthuss mechanism. In Pongo abelii (Sumatran orangutan), this protein is ATP synthase F(0) complex subunit a.